The primary structure comprises 150 residues: MMLNDVRPAIGAKKRKKRVGCGESSGHGKTSGRGHKGQKARAGGSIRIGFEGGQMPLIRRIPKRGFNNKLFHVFYAPVNLSALQGIQQEVIDESLLRQIGVVKGKWDGIKILGKGEITQAYTFKVHAVSASAKEKIEKAGGKIELIKSTP.

Residues 12–43 are disordered; it reads AKKRKKRVGCGESSGHGKTSGRGHKGQKARAG. Over residues 30 to 39 the composition is skewed to basic residues; the sequence is TSGRGHKGQK.

It belongs to the universal ribosomal protein uL15 family. As to quaternary structure, part of the 50S ribosomal subunit.

In terms of biological role, binds to the 23S rRNA. The protein is Large ribosomal subunit protein uL15 of Methylacidiphilum infernorum (isolate V4) (Methylokorus infernorum (strain V4)).